Consider the following 791-residue polypeptide: Major facilitator superfamily domain-containing protein 6 (791 aa).

Ala-2 bears the N-acetylalanine mark. Thr-10 is subject to Phosphothreonine. Residues 22-47 (LADPFNGISREPEPPSNETPSSTETS) form a disordered region. Residues 37-47 (SNETPSSTETS) show a composition bias toward low complexity. A run of 6 helical transmembrane segments spans residues 73–93 (VFYFFFYSAYGSLYPLLPVYY), 105–125 (LLVGIRYFIEFCSAPFWGVVA), 132–152 (KIVLLFSLLCWVLFNLGIGFV), 286–306 (AIFLVILVVVIIGEFFSASSV), 335–355 (WGLAMLSVGIGIDYTHIEVLI), and 369–389 (QIVFIVFGVLMTMALIVATQF). The segment at 407–427 (EIPQVERNNSTESSEETPTTT) is disordered. Positions 416-427 (STESSEETPTTT) are enriched in low complexity. 6 consecutive transmembrane segments (helical) span residues 450 to 470 (VLFVAWFMGFGYGFVFTFLYW), 479 to 499 (TTLFGVCSVLSHVSELTAYFF), 507 to 527 (IGHIRVLYIGLACNTARYIYI), 544 to 564 (GVTHAAIWAACISYLSAAVPP), 579 to 599 (LGLGRGCGAMIGGVLVNYFGA), and 605 to 625 (GIGMACLVILLLFALIQWLAV). Disordered regions lie at residues 662–687 (MPRIEPRLPPKKTKHQEEQEDVNKPA) and 723–791 (LQGT…AGGH). The segment covering 750-768 (SRNQPSPDAAASQTQTSPA) has biased composition (polar residues). Residues 782–791 (QQAQLAAGGH) show a composition bias toward low complexity.

This sequence belongs to the major facilitator superfamily. MFSD6 family. As to quaternary structure, may interact with HLA-B62. In terms of tissue distribution, widely expressed. Expression levels in peripheral blood mononuclear cells are highly variable between individuals, including no expression at all.

The protein resides in the membrane. The polypeptide is Major facilitator superfamily domain-containing protein 6 (MFSD6) (Homo sapiens (Human)).